Consider the following 330-residue polypeptide: Malate dehydrogenase (330 aa).

13–19 (GAAGQIG) is a binding site for NAD(+). Residues Arg94 and Arg100 each contribute to the substrate site. NAD(+)-binding positions include Asn107, Gln114, and 131 to 133 (VGN). Positions 133 and 164 each coordinate substrate. The active-site Proton acceptor is the His189.

Belongs to the LDH/MDH superfamily. MDH type 2 family.

The catalysed reaction is (S)-malate + NAD(+) = oxaloacetate + NADH + H(+). Catalyzes the reversible oxidation of malate to oxaloacetate. This chain is Malate dehydrogenase, found in Deinococcus deserti (strain DSM 17065 / CIP 109153 / LMG 22923 / VCD115).